Reading from the N-terminus, the 258-residue chain is Synapse differentiation-inducing gene protein 1 (258 aa).

Topologically, residues 1–181 (MDGIIEQKSM…NFLMMPPRDH (181 aa)) are cytoplasmic. Residue Ser137 is modified to Phosphoserine. The helical transmembrane segment at 182–202 (LGLSVFSMLCCFWPLGIAAFY) threads the bilayer. Topologically, residues 203 to 228 (LSHETNKAVAKGDLHQASTSSRRALF) are extracellular. The helical intramembrane region spans 229–249 (LAVLSITIGTGVYVGVAVALI). At 250 to 258 (AYLSKNNHL) the chain is on the extracellular side.

Belongs to the CD225/Dispanin family. In terms of assembly, homodimer. Interacts with GRIA1 and GRIA2.

It is found in the cell membrane. The protein resides in the early endosome membrane. Its subcellular location is the postsynaptic density membrane. It localises to the synapse. The protein localises to the cell projection. It is found in the dendrite. The protein resides in the dendritic spine. May regulate AMPA receptor content at nascent synapses, and have a role in postsynaptic development and maturation. This is Synapse differentiation-inducing gene protein 1 (SYNDIG1) from Homo sapiens (Human).